The chain runs to 269 residues: Flagellar hook-basal body complex protein FlhP (269 aa).

Positions 7 to 65 (TASTTLNQLQQQIDTISSNLSNSNTTGYKAKDTNFSELVRQQFDQVDEKNEEVAKARKT) form a coiled coil.

It belongs to the flagella basal body rod proteins family.

This Bacillus subtilis (strain 168) protein is Flagellar hook-basal body complex protein FlhP (flhP).